A 274-amino-acid polypeptide reads, in one-letter code: Diaminopimelate epimerase (274 aa).

3 residues coordinate substrate: N11, Q44, and N64. C73 serves as the catalytic Proton donor. Residues 74 to 75 (GN), N157, N190, and 208 to 209 (ER) contribute to the substrate site. C217 serves as the catalytic Proton acceptor. Position 218-219 (218-219 (GS)) interacts with substrate.

Belongs to the diaminopimelate epimerase family. In terms of assembly, homodimer.

It localises to the cytoplasm. It carries out the reaction (2S,6S)-2,6-diaminopimelate = meso-2,6-diaminopimelate. It participates in amino-acid biosynthesis; L-lysine biosynthesis via DAP pathway; DL-2,6-diaminopimelate from LL-2,6-diaminopimelate: step 1/1. Catalyzes the stereoinversion of LL-2,6-diaminopimelate (L,L-DAP) to meso-diaminopimelate (meso-DAP), a precursor of L-lysine and an essential component of the bacterial peptidoglycan. The protein is Diaminopimelate epimerase of Shigella flexneri serotype 5b (strain 8401).